Reading from the N-terminus, the 145-residue chain is MTEYTLKIKLLKEDAKLPQYAHDNDAGMDLFSTEDKIINPGKHALILTGISIELPENTEAQIRPRSGLALKNGVTVLNTPGTIDAGYRGEIGIILINHGEKNFQVEKGMKIAQMVIKPIVKVNIEEVKMLSESQRGKGGFGSTGK.

Residues 65 to 67 (RSG), N78, and 82 to 84 (TID) each bind substrate.

Belongs to the dUTPase family. The cofactor is Mg(2+).

The enzyme catalyses dUTP + H2O = dUMP + diphosphate + H(+). The protein operates within pyrimidine metabolism; dUMP biosynthesis; dUMP from dCTP (dUTP route): step 2/2. This enzyme is involved in nucleotide metabolism: it produces dUMP, the immediate precursor of thymidine nucleotides and it decreases the intracellular concentration of dUTP so that uracil cannot be incorporated into DNA. The polypeptide is Deoxyuridine 5'-triphosphate nucleotidohydrolase (Clostridium tetani (strain Massachusetts / E88)).